Reading from the N-terminus, the 157-residue chain is UPF0262 protein RHE_CH00582 (157 aa).

The protein belongs to the UPF0262 family.

This chain is UPF0262 protein RHE_CH00582, found in Rhizobium etli (strain ATCC 51251 / DSM 11541 / JCM 21823 / NBRC 15573 / CFN 42).